We begin with the raw amino-acid sequence, 264 residues long: H-2 class II histocompatibility antigen, E-D beta chain (264 aa).

The signal sequence occupies residues 1 to 31 (MVWLPRVPCVAAVILLLTVLSPPVALVRDTR). The interval 32–121 (PRFLEYVTSE…ISDKFLVRRR (90 aa)) is beta-1. Residues 32-225 (PRFLEYVTSE…KAQSTSAQNK (194 aa)) lie on the Extracellular side of the membrane. Disulfide bonds link cysteine 42–cysteine 106 and cysteine 144–cysteine 200. The N-linked (GlcNAc...) asparagine glycan is linked to asparagine 46. The tract at residues 122-215 (VEPTVTVYPT…SLTDPVTVEW (94 aa)) is beta-2. The region spanning 124-214 (PTVTVYPTKT…PSLTDPVTVE (91 aa)) is the Ig-like C1-type domain. The segment at 216–225 (KAQSTSAQNK) is connecting peptide. Residues 226-248 (MLSGVGGFVLGLLFLGAGLFIYF) traverse the membrane as a helical segment. Residues 249-264 (RNQKGQSGLQPTGLLS) are Cytoplasmic-facing.

It belongs to the MHC class II family.

Its subcellular location is the membrane. The polypeptide is H-2 class II histocompatibility antigen, E-D beta chain (Mus musculus (Mouse)).